The chain runs to 126 residues: Protein ApaG (126 aa).

Positions 2–126 (DVSLPCIKIQ…FRLAVPHVLN (125 aa)) constitute an ApaG domain.

The protein is Protein ApaG of Vibrio cholerae serotype O1 (strain ATCC 39541 / Classical Ogawa 395 / O395).